We begin with the raw amino-acid sequence, 804 residues long: SH3-containing GRB2-like protein 3-interacting protein 1 (804 aa).

3 disordered regions span residues 1–90, 124–181, and 199–254; these read MMEG…EESH, LSPS…GPPL, and IWGS…QSAT. Residues 16–34 are compositionally biased toward basic and acidic residues; that stretch reads RKKEKDTDSTGSPDRDGIK. Phosphoserine is present on residues Ser-54, Ser-80, Ser-81, Ser-83, Ser-125, Ser-127, Ser-132, and Ser-145. Phosphothreonine is present on residues Thr-156 and Thr-158. Ser-212 carries the post-translational modification Phosphoserine. The segment covering 221–236 has biased composition (pro residues); that stretch reads TGTPPPLPPKNVPATP. Thr-223 and Thr-235 each carry phosphothreonine. Residues Ser-241, Ser-263, Ser-276, Ser-292, and Ser-295 each carry the phosphoserine modification. The segment covering 289–309 has biased composition (basic and acidic residues); sequence VHFSDTSPEHVTPELTPREKV. The disordered stretch occupies residues 289–500; the sequence is VHFSDTSPEH…LSAATTPTVE (212 aa). Phosphothreonine occurs at positions 300 and 304. The segment covering 322–346 has biased composition (pro residues); sequence SPAPGPLGPPGPTGPPGPPGPPRNV. Ser-348 carries the post-translational modification Phosphoserine. A compositionally biased stretch (basic and acidic residues) spans 354 to 369; that stretch reads EVQKKVAEQTFIKDDY. Ser-375 is subject to Phosphoserine. The residue at position 386 (Thr-386) is a Phosphothreonine. A compositionally biased stretch (low complexity) spans 413-432; sequence TSGASSPARPATPLLPCSST. Residues 433 to 451 show a composition bias toward pro residues; it reads TPPPPPPRPPSRPKLPPGK. Composition is skewed to low complexity over residues 458 to 468 and 475 to 498; these read SRPFSPPIHSS and PLAR…TTPT. Phosphoserine is present on Ser-462. Residues 535–803 form the MHD domain; it reads TLPVAAAFTE…RFAAGKYLAD (269 aa). Interaction with DPF motifs-containing proteins stretches follow at residues 537-543, 569-571, 643-646, and 789-794; these read PVAAAFT, SFP, TYYN, and SLIKKR. The tract at residues 625–804 is necessary and sufficient to mediate interaction with CANX; that stretch reads MPNLMTHLKK…FAAGKYLADN (180 aa).

Interacts with proteins essential or regulating the formation of functional clathrin-coated pits. Interacts with CANX. Interacts with AP2A1. Interacts with EPS15. Interacts with SH3GL3. Interacts with AMPH. Interacts with ITSN1 (via SH3 domains). Interacts with and REPS1.

Its subcellular location is the membrane. The protein localises to the clathrin-coated pit. Functionally, may function in clathrin-mediated endocytosis. Has both a membrane binding/tubulating activity and the ability to recruit proteins essential to the formation of functional clathrin-coated pits. Has a preference for membranes enriched in phosphatidylserine and phosphoinositides and is required for the endocytosis of the transferrin receptor. May also bind tubulin. May play a role in the regulation of energy homeostasis. The protein is SH3-containing GRB2-like protein 3-interacting protein 1 (SGIP1) of Pongo abelii (Sumatran orangutan).